A 739-amino-acid polypeptide reads, in one-letter code: Phosphoribosylformylglycinamidine synthase subunit PurL (739 aa).

His-53 is an active-site residue. ATP contacts are provided by Tyr-56 and Lys-95. Residue Glu-97 participates in Mg(2+) binding. Substrate-binding positions include 98 to 101 and Arg-120; that span reads SHNH. The active-site Proton acceptor is His-99. Asp-121 contributes to the Mg(2+) binding site. Gln-244 serves as a coordination point for substrate. Asp-274 lines the Mg(2+) pocket. Residue 318–320 coordinates substrate; that stretch reads ESQ. Positions 501 and 538 each coordinate ATP. A Mg(2+)-binding site is contributed by Asn-539. Position 541 (Ser-541) interacts with substrate.

It belongs to the FGAMS family. Monomer. Part of the FGAM synthase complex composed of 1 PurL, 1 PurQ and 2 PurS subunits.

Its subcellular location is the cytoplasm. It catalyses the reaction N(2)-formyl-N(1)-(5-phospho-beta-D-ribosyl)glycinamide + L-glutamine + ATP + H2O = 2-formamido-N(1)-(5-O-phospho-beta-D-ribosyl)acetamidine + L-glutamate + ADP + phosphate + H(+). Its pathway is purine metabolism; IMP biosynthesis via de novo pathway; 5-amino-1-(5-phospho-D-ribosyl)imidazole from N(2)-formyl-N(1)-(5-phospho-D-ribosyl)glycinamide: step 1/2. Its function is as follows. Part of the phosphoribosylformylglycinamidine synthase complex involved in the purines biosynthetic pathway. Catalyzes the ATP-dependent conversion of formylglycinamide ribonucleotide (FGAR) and glutamine to yield formylglycinamidine ribonucleotide (FGAM) and glutamate. The FGAM synthase complex is composed of three subunits. PurQ produces an ammonia molecule by converting glutamine to glutamate. PurL transfers the ammonia molecule to FGAR to form FGAM in an ATP-dependent manner. PurS interacts with PurQ and PurL and is thought to assist in the transfer of the ammonia molecule from PurQ to PurL. This is Phosphoribosylformylglycinamidine synthase subunit PurL from Listeria welshimeri serovar 6b (strain ATCC 35897 / DSM 20650 / CCUG 15529 / CIP 8149 / NCTC 11857 / SLCC 5334 / V8).